Consider the following 298-residue polypeptide: Probable endonuclease 4 (298 aa).

Residues His-70, His-111, Glu-146, Asp-180, His-183, His-215, Asp-228, His-230, and Glu-260 each coordinate Zn(2+).

It belongs to the AP endonuclease 2 family. The cofactor is Zn(2+).

The enzyme catalyses Endonucleolytic cleavage to 5'-phosphooligonucleotide end-products.. Endonuclease IV plays a role in DNA repair. It cleaves phosphodiester bonds at apurinic or apyrimidinic (AP) sites, generating a 3'-hydroxyl group and a 5'-terminal sugar phosphate. The protein is Probable endonuclease 4 of Halalkalibacterium halodurans (strain ATCC BAA-125 / DSM 18197 / FERM 7344 / JCM 9153 / C-125) (Bacillus halodurans).